Reading from the N-terminus, the 112-residue chain is uncharacterized protein (112 aa).

Serine 51 and serine 53 each carry phosphoserine. The helical transmembrane segment at 90-110 (FIFTLSMFLIAFILLIAFVSF) threads the bilayer.

The protein localises to the golgi apparatus membrane. It is found in the endoplasmic reticulum membrane. This is an uncharacterized protein from Schizosaccharomyces pombe (strain 972 / ATCC 24843) (Fission yeast).